Consider the following 500-residue polypeptide: Glutamate--tRNA ligase (500 aa).

Residues 13–23 carry the 'HIGH' region motif; sequence PSPTGTPHVGM. The 'KMSKS' region motif lies at 258 to 262; sequence KLSKR. Residue Lys261 coordinates ATP.

The protein belongs to the class-I aminoacyl-tRNA synthetase family. Glutamate--tRNA ligase type 1 subfamily. Monomer.

It is found in the cytoplasm. The catalysed reaction is tRNA(Glu) + L-glutamate + ATP = L-glutamyl-tRNA(Glu) + AMP + diphosphate. In terms of biological role, catalyzes the attachment of glutamate to tRNA(Glu) in a two-step reaction: glutamate is first activated by ATP to form Glu-AMP and then transferred to the acceptor end of tRNA(Glu). The polypeptide is Glutamate--tRNA ligase (Corynebacterium jeikeium (strain K411)).